The sequence spans 440 residues: Chromosomal replication initiator protein DnaA (440 aa).

Positions 1–74 are domain I, interacts with DnaA modulators; sequence MNPSQILENL…VQSGNKAIIN (74 aa). The domain II stretch occupies residues 74 to 99; the sequence is NIQAQSAKQSNKSTKIDIAHIKAQST. Residues 100 to 316 are domain III, AAA+ region; that stretch reads ILNPSFTFES…GIIISLNAYA (217 aa). 4 residues coordinate ATP: Gly146, Gly148, Lys149, and Thr150. The domain IV, binds dsDNA stretch occupies residues 317-440; it reads TILGQEITLE…KNKILVKSQS (124 aa).

Belongs to the DnaA family. Oligomerizes as a right-handed, spiral filament on DNA at oriC.

The protein localises to the cytoplasm. Its function is as follows. Plays an essential role in the initiation and regulation of chromosomal replication. ATP-DnaA binds to the origin of replication (oriC) to initiate formation of the DNA replication initiation complex once per cell cycle. Binds the DnaA box (a 9 base pair repeat at the origin) and separates the double-stranded (ds)DNA. Forms a right-handed helical filament on oriC DNA; dsDNA binds to the exterior of the filament while single-stranded (ss)DNA is stabiized in the filament's interior. The ATP-DnaA-oriC complex binds and stabilizes one strand of the AT-rich DNA unwinding element (DUE), permitting loading of DNA polymerase. After initiation quickly degrades to an ADP-DnaA complex that is not apt for DNA replication. Binds acidic phospholipids. This is Chromosomal replication initiator protein DnaA from Campylobacter jejuni subsp. jejuni serotype O:2 (strain ATCC 700819 / NCTC 11168).